A 209-amino-acid chain; its full sequence is Ribosomal RNA large subunit methyltransferase E (209 aa).

S-adenosyl-L-methionine-binding residues include glycine 60, tryptophan 62, aspartate 80, aspartate 96, and aspartate 121. The active-site Proton acceptor is the lysine 161. The segment covering 182-196 has biased composition (basic and acidic residues); that stretch reads VQMRKPSSSRDRSRE. The interval 182-209 is disordered; that stretch reads VQMRKPSSSRDRSREQYLLGRGFRGRSE.

It belongs to the class I-like SAM-binding methyltransferase superfamily. RNA methyltransferase RlmE family.

The protein resides in the cytoplasm. The catalysed reaction is uridine(2552) in 23S rRNA + S-adenosyl-L-methionine = 2'-O-methyluridine(2552) in 23S rRNA + S-adenosyl-L-homocysteine + H(+). Functionally, specifically methylates the uridine in position 2552 of 23S rRNA at the 2'-O position of the ribose in the fully assembled 50S ribosomal subunit. This Pseudomonas fluorescens (strain ATCC BAA-477 / NRRL B-23932 / Pf-5) protein is Ribosomal RNA large subunit methyltransferase E.